We begin with the raw amino-acid sequence, 273 residues long: Undecaprenyl-diphosphatase (273 aa).

Helical transmembrane passes span 6 to 26 (SLLI…LPVS), 45 to 65 (AKTF…VMFW), 90 to 110 (LTLI…LLFH), 116 to 136 (LFNP…LIAA), 190 to 210 (YAAS…ATAL), 222 to 242 (GDIP…LIAI), and 252 to 272 (ISFI…YVVF).

Belongs to the UppP family.

The protein resides in the cell inner membrane. The enzyme catalyses di-trans,octa-cis-undecaprenyl diphosphate + H2O = di-trans,octa-cis-undecaprenyl phosphate + phosphate + H(+). Its function is as follows. Catalyzes the dephosphorylation of undecaprenyl diphosphate (UPP). Confers resistance to bacitracin. The protein is Undecaprenyl-diphosphatase of Escherichia coli O139:H28 (strain E24377A / ETEC).